The primary structure comprises 102 residues: MIISKFGLGQQIRHKLLGFPGVIIDIDPEYSLETPTWEEISGNDTPRSEPWYHVVMEDNEGQPMHTYLAEAHLMKEELSEHDHPSLNELAEVIQRRAPQLRH.

It belongs to the HspQ family.

Its subcellular location is the cytoplasm. Involved in the degradation of certain denaturated proteins, including DnaA, during heat shock stress. The sequence is that of Heat shock protein HspQ from Pectobacterium atrosepticum (strain SCRI 1043 / ATCC BAA-672) (Erwinia carotovora subsp. atroseptica).